The sequence spans 441 residues: Hydroxycinnamoyl-CoA:5-hydroxyanthranilate N-hydroxycinnamoyltransferase HHT1 (441 aa).

Active-site proton acceptor residues include His-158 and Asp-388.

This sequence belongs to the plant acyltransferase family.

The catalysed reaction is 5-hydroxyanthranilate + (E)-4-coumaroyl-CoA = avenanthramide A + CoA. It catalyses the reaction 5-hydroxyanthranilate + (E)-caffeoyl-CoA = avenanthramide C + CoA. Its function is as follows. Involved in the biosynthesis of avenanthramide phytoalexins, which are phenolic alkaloids found mainly in oats. Catalyzes the N-acylation of 5-hydroxyanthranilate with 4-coumaroyl-CoA or caffeoyl-CoA as acyl donors, forming avenanthramide A and avenanthramide C, respectively. Does not accept feruloyl-CoA as a substrate. The chain is Hydroxycinnamoyl-CoA:5-hydroxyanthranilate N-hydroxycinnamoyltransferase HHT1 from Avena sativa (Oat).